A 33-amino-acid polypeptide reads, in one-letter code: Rugosin-A (33 aa).

A disulfide bond links C27 and C33.

This sequence belongs to the frog skin active peptide (FSAP) family. Brevinin subfamily. As to expression, expressed by the skin glands.

It localises to the secreted. Functionally, has antibacterial activity against Gram-positive bacteria. In Glandirana rugosa (Japanese wrinkled frog), this protein is Rugosin-A.